A 301-amino-acid polypeptide reads, in one-letter code: Ornithine carbamoyltransferase (301 aa).

Carbamoyl phosphate-binding positions include 46 to 49 (STRT), glutamine 73, arginine 97, and 124 to 127 (HPCQ). L-ornithine is bound by residues asparagine 154, aspartate 218, and 222-223 (SM). Residues 258–259 (CL) and arginine 286 contribute to the carbamoyl phosphate site.

Belongs to the aspartate/ornithine carbamoyltransferase superfamily. OTCase family.

The protein localises to the cytoplasm. The enzyme catalyses carbamoyl phosphate + L-ornithine = L-citrulline + phosphate + H(+). It functions in the pathway amino-acid biosynthesis; L-arginine biosynthesis; L-arginine from L-ornithine and carbamoyl phosphate: step 1/3. Functionally, reversibly catalyzes the transfer of the carbamoyl group from carbamoyl phosphate (CP) to the N(epsilon) atom of ornithine (ORN) to produce L-citrulline. This Methanothermobacter thermautotrophicus (strain ATCC 29096 / DSM 1053 / JCM 10044 / NBRC 100330 / Delta H) (Methanobacterium thermoautotrophicum) protein is Ornithine carbamoyltransferase (argF).